Here is a 354-residue protein sequence, read N- to C-terminus: Replication factor C subunit 5 (354 aa).

ATP-binding positions include valine 5, serine 17, 43–51, and arginine 231; that span reads GPNGTGKKT.

This sequence belongs to the activator 1 small subunits family. In terms of assembly, replication factor C (RFC) is a heteropentamer of subunits RFC1, RFC2, RFC3, RFC4 and RFC5 and forms a complex with POL30/PCNA in the presence of ATP. Component of the RAD24-RFC complex which consists of RAD24, RFC2, RFC3, RFC4 and RFC5 and associates with the checkpoint clamp DDC1:MEC3:RAD17 complex. Component of the ELG1-RFC complex which consists of ELG1, RFC2, RFC3, RFC4 and RFC5. Component of the CTF18-RFC complex, which consists of CTF18, CTF8, DCC1, RFC2, RFC3, RFC4 and RFC5. RFC5 interacts with ECO1.

The protein localises to the nucleus. In terms of biological role, component of ATP-dependent clamp loader (RFC and RFC-like) complexes for DNA clamps, such as the POL30/PCNA homotrimer and the checkpoint clamp DDC1:MEC3:RAD17 complex. During a clamp loading circle, the RFC:clamp complex binds to DNA and the recognition of the double-stranded/single-stranded junction stimulates ATP hydrolysis by RFC. The complex presumably provides bipartite ATP sites in which one subunit supplies a catalytic site for hydrolysis of ATP bound to the neighboring subunit. Dissociation of RFC from the clamp leaves the clamp encircling DNA. Component of the replication factor C (RFC or activator 1) complex which loads POL30/PCNA and acts during elongation of primed DNA templates by DNA polymerase delta and epsilon. RFC has an essential but redundant activity in sister chromatid cohesion establishment. Component of the RFC-like complex CTF18-RFC which is required for efficient establishment of chromosome cohesion during S-phase and may load or unload POL30/PCNA. Component of the RFC-like RAD24-RFC complex which loads the checkpoint clamp DDC1:MEC3:RAD17 complex and is involved in DNA repair pathways. Component of the RFC-like ELG1-RFC complex which appears to have a role in DNA replication, replication fork re-start, recombination and repair. This is Replication factor C subunit 5 (RFC5) from Saccharomyces cerevisiae (strain ATCC 204508 / S288c) (Baker's yeast).